A 428-amino-acid polypeptide reads, in one-letter code: Protein Wnt-8b (428 aa).

The signal sequence occupies residues 1 to 22 (MFYTGSFWFIFFILPAIPFCHS). The cysteines at positions 54 and 65 are disulfide-linked. Asparagine 123 and asparagine 176 each carry an N-linked (GlcNAc...) asparagine glycan. 10 disulfides stabilise this stretch: cysteine 177-cysteine 185, cysteine 187-cysteine 205, cysteine 253-cysteine 267, cysteine 255-cysteine 262, cysteine 329-cysteine 367, cysteine 345-cysteine 360, cysteine 364-cysteine 406, cysteine 382-cysteine 397, cysteine 384-cysteine 394, and cysteine 389-cysteine 390. Serine 259 carries O-palmitoleoyl serine lipidation. The N-linked (GlcNAc...) asparagine glycan is linked to asparagine 332.

It belongs to the Wnt family. Palmitoleoylation is required for efficient binding to frizzled receptors. Depalmitoleoylation leads to Wnt signaling pathway inhibition. In terms of processing, proteolytic processing by tiki1 and tiki2 promotes oxidation and formation of large disulfide-bond oligomers, leading to inactivation of wnt8b. In adults, in brain.

It is found in the secreted. The protein localises to the extracellular space. The protein resides in the extracellular matrix. Its function is as follows. Ligand for members of the frizzled family of seven transmembrane receptors. Plays a role in the initiation of dorsal axis development. May activate a Nieuwkoop center-like signaling pathway. This chain is Protein Wnt-8b (wnt8b), found in Xenopus laevis (African clawed frog).